Reading from the N-terminus, the 277-residue chain is MALKHFKPVTPSLRQLVIVDRSGLYKGKPVKTLTEGKSSSGGRNNNGRITVRFRGGGHKQTYRLVDFKRTKRGVPAVVDRIEYDPNRSAFIALIKYEDGDLAYILAPQRLAVGDQVIAGEQVDVKPGNAGPLSSLPVGTIVHNVELKVGKGGQIARSAGTYAQIVGRDQGYVIVRLNSGEQRLVLGACYATVGAVSNPDHMNISLGKAGRNRWLGRKPHNRGVTMNPVDHPHGGGEGRTSGGRNPVTPWGFPTKGKKTRNNKATDKFIVSSRHKRKK.

The segment at 222 to 277 (GVTMNPVDHPHGGGEGRTSGGRNPVTPWGFPTKGKKTRNNKATDKFIVSSRHKRKK) is disordered.

The protein belongs to the universal ribosomal protein uL2 family. In terms of assembly, part of the 50S ribosomal subunit. Forms a bridge to the 30S subunit in the 70S ribosome.

In terms of biological role, one of the primary rRNA binding proteins. Required for association of the 30S and 50S subunits to form the 70S ribosome, for tRNA binding and peptide bond formation. It has been suggested to have peptidyltransferase activity; this is somewhat controversial. Makes several contacts with the 16S rRNA in the 70S ribosome. The chain is Large ribosomal subunit protein uL2 from Xanthobacter autotrophicus (strain ATCC BAA-1158 / Py2).